Here is a 192-residue protein sequence, read N- to C-terminus: Peptidyl-tRNA hydrolase (192 aa).

A tRNA-binding site is contributed by Y17. Catalysis depends on H22, which acts as the Proton acceptor. TRNA-binding residues include F68, N70, and N116.

The protein belongs to the PTH family. Monomer.

The protein resides in the cytoplasm. The catalysed reaction is an N-acyl-L-alpha-aminoacyl-tRNA + H2O = an N-acyl-L-amino acid + a tRNA + H(+). In terms of biological role, hydrolyzes ribosome-free peptidyl-tRNAs (with 1 or more amino acids incorporated), which drop off the ribosome during protein synthesis, or as a result of ribosome stalling. Catalyzes the release of premature peptidyl moieties from peptidyl-tRNA molecules trapped in stalled 50S ribosomal subunits, and thus maintains levels of free tRNAs and 50S ribosomes. The protein is Peptidyl-tRNA hydrolase of Xylella fastidiosa (strain M12).